The sequence spans 117 residues: MDTETSPLLSHNLSTREGIKQSTQGLLAHTIAKYPGTTAILLGILILLVIILIIVAIVYYNRAVDCKSSMPKPPPSYYVQQPEPHHHFPVFFRKRKNSTSQQSHIPSDEQLAELAHS.

N-linked (GlcNAc...) asparagine; by host glycosylation is present at N12. A helical transmembrane segment spans residues 39–59; that stretch reads AILLGILILLVIILIIVAIVY. The segment at 96–117 is disordered; the sequence is KNSTSQQSHIPSDEQLAELAHS. The N-linked (GlcNAc...) asparagine; by host glycan is linked to N97.

It belongs to the asfivirus minor capsid protein p17 family. As to quaternary structure, interacts with the minor capsid protein M1249L and with the hexon capsid protein p72 capsomers; these interactions form a rigid zipper structure that stabilizes the capsomers. Interacts with host STING1.

Its subcellular location is the virion membrane. It is found in the host endoplasmic reticulum membrane. Its function is as follows. Together with the penton and the other minor capsid proteins (M1249L, p49), forms a complicated network immediately below the outer capsid shell, stabilizing the whole capsid. Three copies of p17 encircle each p72 capsomer in the inner capsid shell, anchoring p72 capsomers on the inner membrane. Required for the assembly of the capsid and icosahedral morphogenesis. Additionally, inhibits the host cGAS-STING pathway through its interaction with STING1 and subsequent interference of the recruitment of downstream components TBK1 and IKBKE. In African swine fever virus (isolate Warthog/Namibia/Wart80/1980) (ASFV), this protein is Minor capsid protein p17.